The sequence spans 377 residues: Chaperone protein DnaJ (377 aa).

Residues 5-70 (DYYEVLGVSR…DKKAAYDQFG (66 aa)) enclose the J domain. The segment at 133-211 (GLTKELRIPT…CHGDGRVEKS (79 aa)) adopts a CR-type zinc-finger fold. Zn(2+) contacts are provided by Cys146, Cys149, Cys163, Cys166, Cys185, Cys188, Cys199, and Cys202. 4 CXXCXGXG motif repeats span residues 146–153 (CDLCEGSG), 163–170 (CGTCHGQG), 185–192 (CPTCHGRG), and 199–206 (CSKCHGDG).

This sequence belongs to the DnaJ family. In terms of assembly, homodimer. Zn(2+) is required as a cofactor.

The protein resides in the cytoplasm. Functionally, participates actively in the response to hyperosmotic and heat shock by preventing the aggregation of stress-denatured proteins and by disaggregating proteins, also in an autonomous, DnaK-independent fashion. Unfolded proteins bind initially to DnaJ; upon interaction with the DnaJ-bound protein, DnaK hydrolyzes its bound ATP, resulting in the formation of a stable complex. GrpE releases ADP from DnaK; ATP binding to DnaK triggers the release of the substrate protein, thus completing the reaction cycle. Several rounds of ATP-dependent interactions between DnaJ, DnaK and GrpE are required for fully efficient folding. Also involved, together with DnaK and GrpE, in the DNA replication of plasmids through activation of initiation proteins. The polypeptide is Chaperone protein DnaJ (Shewanella baltica (strain OS195)).